The chain runs to 363 residues: tRNA(Met) cytidine acetate ligase (363 aa).

ATP-binding positions include 7-20, Gly96, Asn152, and Arg175; that span reads IAEF…HKYL.

The protein belongs to the TmcAL family.

The protein localises to the cytoplasm. It carries out the reaction cytidine(34) in elongator tRNA(Met) + acetate + ATP = N(4)-acetylcytidine(34) in elongator tRNA(Met) + AMP + diphosphate. Catalyzes the formation of N(4)-acetylcytidine (ac(4)C) at the wobble position of elongator tRNA(Met), using acetate and ATP as substrates. First activates an acetate ion to form acetyladenylate (Ac-AMP) and then transfers the acetyl group to tRNA to form ac(4)C34. This is tRNA(Met) cytidine acetate ligase from Streptococcus thermophilus (strain CNRZ 1066).